The primary structure comprises 569 residues: Urease subunit alpha (569 aa).

The region spanning 132-569 is the Urease domain; the sequence is GGVDTHIHFI…VPLGQRYFLF (438 aa). Residues His-137, His-139, and Lys-220 each coordinate Ni(2+). Position 220 is an N6-carboxylysine (Lys-220). His-222 is a binding site for substrate. 2 residues coordinate Ni(2+): His-249 and His-275. The Proton donor role is filled by His-323. Asp-363 provides a ligand contact to Ni(2+).

Belongs to the metallo-dependent hydrolases superfamily. Urease alpha subunit family. As to quaternary structure, heterotrimer of UreA (gamma), UreB (beta) and UreC (alpha) subunits. Three heterotrimers associate to form the active enzyme. It depends on Ni cation as a cofactor. Post-translationally, carboxylation allows a single lysine to coordinate two nickel ions.

Its subcellular location is the cytoplasm. It carries out the reaction urea + 2 H2O + H(+) = hydrogencarbonate + 2 NH4(+). It participates in nitrogen metabolism; urea degradation; CO(2) and NH(3) from urea (urease route): step 1/1. This chain is Urease subunit alpha, found in Bacillus subtilis (strain 168).